The primary structure comprises 308 residues: tRNA pseudouridine synthase B (308 aa).

Asp47 serves as the catalytic Nucleophile.

It belongs to the pseudouridine synthase TruB family. Type 1 subfamily.

It catalyses the reaction uridine(55) in tRNA = pseudouridine(55) in tRNA. Responsible for synthesis of pseudouridine from uracil-55 in the psi GC loop of transfer RNAs. The chain is tRNA pseudouridine synthase B from Xanthomonas campestris pv. campestris (strain B100).